The following is a 145-amino-acid chain: Large ribosomal subunit protein uL13 (145 aa).

Belongs to the universal ribosomal protein uL13 family. Part of the 50S ribosomal subunit.

This protein is one of the early assembly proteins of the 50S ribosomal subunit, although it is not seen to bind rRNA by itself. It is important during the early stages of 50S assembly. In Geobacillus kaustophilus (strain HTA426), this protein is Large ribosomal subunit protein uL13.